The primary structure comprises 103 residues: Isocitrate dehydrogenase [NAD] subunit beta, mitochondrial (103 aa).

This sequence belongs to the isocitrate and isopropylmalate dehydrogenases family. In terms of assembly, heterooligomer of subunits alpha (IDH3A), beta (IDH3B), and gamma (IDH3G) in the apparent ratio of 2:1:1. The heterodimer containing one IDH3A and one IDH3B subunit and the heterodimer containing one IDH3A and one IDH3G subunit assemble into a heterotetramer (which contains two subunits of IDH3A, one of IDH3B and one of IDH3G) and further into the heterooctamer.

Its subcellular location is the mitochondrion. Its activity is regulated as follows. The heterotetramer and the heterodimer composed of IDH3A and IDH3G subunits can be allosterically activated by citrate (CIT) or/and ADP, and the two activators can act independently or synergistically. The heterodimer composed of IDH3A and IDH3B subunits cannot be allosterically regulated and the allosteric regulation of the heterotetramer is through the IDH3G subunit and not the IDH3B subunit. The IDH3G subunit contains the allosteric site which consists of a CIT-binding site and an ADP-binding site, and the binding of CIT and ADP causes conformational changes at the allosteric site which are transmitted to the active site in the catalytic subunit (IDH3A) through a cascade of conformational changes at the heterodimer interface, leading to stabilization of the isocitrate-binding at the active site and thus activation of the enzyme. ATP can activate the heterotetramer and the heterodimer composed of IDH3A and IDH3G subunits at low concentrations but inhibits their activities at high concentrations, whereas ATP exhibits only inhibitory effect on the heterodimer composed of IDH3A and IDH3B subunits. Functionally, plays a structural role to facilitate the assembly and ensure the full activity of the enzyme catalyzing the decarboxylation of isocitrate (ICT) into alpha-ketoglutarate. The heterodimer composed of the alpha (IDH3A) and beta (IDH3B) subunits and the heterodimer composed of the alpha (IDH3A) and gamma (IDH3G) subunits, have considerable basal activity but the full activity of the heterotetramer (containing two subunits of IDH3A, one of IDH3B and one of IDH3G) requires the assembly and cooperative function of both heterodimers. The polypeptide is Isocitrate dehydrogenase [NAD] subunit beta, mitochondrial (IDH3B) (Sus scrofa (Pig)).